The following is a 180-amino-acid chain: Isopentenyl-diphosphate Delta-isomerase (180 aa).

Residues His29 and His36 each coordinate Mn(2+). The active site involves Cys71. Residue His73 participates in Mn(2+) binding. Position 91 (Glu91) interacts with Mg(2+). Mn(2+) is bound by residues Glu118 and Glu120. Glu120 is an active-site residue.

The protein belongs to the IPP isomerase type 1 family. Requires Mg(2+) as cofactor. Mn(2+) serves as cofactor.

The protein resides in the cytoplasm. It catalyses the reaction isopentenyl diphosphate = dimethylallyl diphosphate. It participates in isoprenoid biosynthesis; dimethylallyl diphosphate biosynthesis; dimethylallyl diphosphate from isopentenyl diphosphate: step 1/1. Its function is as follows. Catalyzes the 1,3-allylic rearrangement of the homoallylic substrate isopentenyl (IPP) to its highly electrophilic allylic isomer, dimethylallyl diphosphate (DMAPP). The chain is Isopentenyl-diphosphate Delta-isomerase from Kocuria rhizophila (strain ATCC 9341 / DSM 348 / NBRC 103217 / DC2201).